We begin with the raw amino-acid sequence, 413 residues long: Serine hydroxymethyltransferase (413 aa).

(6S)-5,6,7,8-tetrahydrofolate is bound by residues leucine 117 and 121 to 123 (GHL). Lysine 226 is subject to N6-(pyridoxal phosphate)lysine. (6S)-5,6,7,8-tetrahydrofolate contacts are provided by residues glutamate 239 and 349–351 (SPF).

The protein belongs to the SHMT family. In terms of assembly, homodimer. Pyridoxal 5'-phosphate serves as cofactor.

The protein resides in the cytoplasm. The enzyme catalyses (6R)-5,10-methylene-5,6,7,8-tetrahydrofolate + glycine + H2O = (6S)-5,6,7,8-tetrahydrofolate + L-serine. It functions in the pathway one-carbon metabolism; tetrahydrofolate interconversion. The protein operates within amino-acid biosynthesis; glycine biosynthesis; glycine from L-serine: step 1/1. Catalyzes the reversible interconversion of serine and glycine with tetrahydrofolate (THF) serving as the one-carbon carrier. This reaction serves as the major source of one-carbon groups required for the biosynthesis of purines, thymidylate, methionine, and other important biomolecules. Also exhibits THF-independent aldolase activity toward beta-hydroxyamino acids, producing glycine and aldehydes, via a retro-aldol mechanism. The protein is Serine hydroxymethyltransferase of Bacillus cereus (strain ATCC 10987 / NRS 248).